Consider the following 200-residue polypeptide: Pyridoxal 5'-phosphate synthase subunit PdxT (200 aa).

Position 46–48 (46–48 (GES)) interacts with L-glutamine. Cys78 acts as the Nucleophile in catalysis. L-glutamine-binding positions include Arg107 and 138-139 (IR). Active-site charge relay system residues include His175 and Glu177.

Belongs to the glutaminase PdxT/SNO family. In the presence of PdxS, forms a dodecamer of heterodimers. Only shows activity in the heterodimer.

The enzyme catalyses aldehydo-D-ribose 5-phosphate + D-glyceraldehyde 3-phosphate + L-glutamine = pyridoxal 5'-phosphate + L-glutamate + phosphate + 3 H2O + H(+). The catalysed reaction is L-glutamine + H2O = L-glutamate + NH4(+). The protein operates within cofactor biosynthesis; pyridoxal 5'-phosphate biosynthesis. Its function is as follows. Catalyzes the hydrolysis of glutamine to glutamate and ammonia as part of the biosynthesis of pyridoxal 5'-phosphate. The resulting ammonia molecule is channeled to the active site of PdxS. This is Pyridoxal 5'-phosphate synthase subunit PdxT from Corynebacterium glutamicum (strain ATCC 13032 / DSM 20300 / JCM 1318 / BCRC 11384 / CCUG 27702 / LMG 3730 / NBRC 12168 / NCIMB 10025 / NRRL B-2784 / 534).